The primary structure comprises 350 residues: Serine-threonine kinase receptor-associated protein (350 aa).

WD repeat units follow at residues Gly12–Leu56, Gly57–Thr96, Ala98–Lys137, Gly141–Ser179, Leu180–Val212, Glu221–Lys262, and Gly263–Leu302. Phosphoserine occurs at positions 312, 335, and 338.

It belongs to the WD repeat STRAP family. Part of the core SMN complex that contains SMN1, GEMIN2/SIP1, DDX20/GEMIN3, GEMIN4, GEMIN5, GEMIN6, GEMIN7, GEMIN8 and STRAP/UNRIP. Part of the SMN-Sm complex that contains SMN1, GEMIN2/SIP1, DDX20/GEMIN3, GEMIN4, GEMIN5, GEMIN6, GEMIN7, GEMIN8, STRAP/UNRIP and the Sm proteins SNRPB, SNRPD1, SNRPD2, SNRPD3, SNRPE, SNRPF and SNRPG. Associates with the SMN complex in the cytoplasm but not in the nucleus. Interacts with GEMIN6; the interaction is direct. Interacts with GEMIN7; the interaction is direct. Interacts with CSDE1/UNR and MAWBP. Interacts with PDPK1. Interacts with TRIM48.

Its subcellular location is the cytoplasm. The protein resides in the nucleus. The SMN complex catalyzes the assembly of small nuclear ribonucleoproteins (snRNPs), the building blocks of the spliceosome, and thereby plays an important role in the splicing of cellular pre-mRNAs. Most spliceosomal snRNPs contain a common set of Sm proteins SNRPB, SNRPD1, SNRPD2, SNRPD3, SNRPE, SNRPF and SNRPG that assemble in a heptameric protein ring on the Sm site of the small nuclear RNA to form the core snRNP (Sm core). In the cytosol, the Sm proteins SNRPD1, SNRPD2, SNRPE, SNRPF and SNRPG are trapped in an inactive 6S pICln-Sm complex by the chaperone CLNS1A that controls the assembly of the core snRNP. To assemble core snRNPs, the SMN complex accepts the trapped 5Sm proteins from CLNS1A forming an intermediate. Binding of snRNA inside 5Sm triggers eviction of the SMN complex, thereby allowing binding of SNRPD3 and SNRPB to complete assembly of the core snRNP. STRAP plays a role in the cellular distribution of the SMN complex. Negatively regulates TGF-beta signaling but positively regulates the PDPK1 kinase activity by enhancing its autophosphorylation and by significantly reducing the association of PDPK1 with 14-3-3 protein. The chain is Serine-threonine kinase receptor-associated protein (STRAP) from Homo sapiens (Human).